The sequence spans 69 residues: MKQLIIGLIKLYQYSIGLLIPPSCRFYPTCSNYMREALTKHGLIKGLWLGTRRILRCHPWNPGGYDPIP.

The protein belongs to the UPF0161 family.

It is found in the cell inner membrane. Its function is as follows. Could be involved in insertion of integral membrane proteins into the membrane. The sequence is that of Putative membrane protein insertion efficiency factor from Nitrosomonas eutropha (strain DSM 101675 / C91 / Nm57).